The following is a 491-amino-acid chain: Serine/threonine-protein kinase 33 (491 aa).

The disordered stretch occupies residues 51–89 (FASQERKKERNTSRESSLKDLSIRTSNVERKPQAQWSRS). Residues 54 to 82 (QERKKERNTSRESSLKDLSIRTSNVERKP) show a composition bias toward basic and acidic residues. The Protein kinase domain occupies 111 to 377 (YTFGRILGQG…AKELLDNQWL (267 aa)). Residues 117 to 125 (LGQGSFGMV) and Lys140 contribute to the ATP site. Asp233 acts as the Proton acceptor in catalysis. A disordered region spans residues 398–491 (KNNPESDEET…TTLFRGKKRL (94 aa)). Residues 402–414 (ESDEETNTDEETE) show a composition bias toward acidic residues. The residue at position 403 (Ser403) is a Phosphoserine. Over residues 415-431 (QSAVYSPSANTAKQPTN) the composition is skewed to polar residues. The span at 445–457 (SSNSSSSKLLSAE) shows a compositional bias: low complexity. Residues 475 to 484 (AKTTLKSTTL) show a composition bias toward polar residues.

This sequence belongs to the protein kinase superfamily. CAMK Ser/Thr protein kinase family. CaMK subfamily. Homodimer. Post-translationally, autophosphorylated. As to expression, highly expressed in testis, particularly in cells from the spermatogenic epithelia. Present in meiotic and post meiotic sperm cells. Significant expression is detected in lung epithelia, alveolar macrophages, horizontal cells in the retina and in embryonic organs such as heart, brain and spinal cord. Also expressed in pituitary gland, kidney, pancreas, trachea and thyroid gland.

The protein localises to the cytoplasm. The protein resides in the cytoskeleton. It is found in the perinuclear region. It catalyses the reaction L-seryl-[protein] + ATP = O-phospho-L-seryl-[protein] + ADP + H(+). It carries out the reaction L-threonyl-[protein] + ATP = O-phospho-L-threonyl-[protein] + ADP + H(+). Its activity is regulated as follows. Specifically inhibited by CDD-2807 ((3-([1,1'-Biphenyl]-2-ylethynyl)-1H-indazol-5-yl)(2,6-diazaspiro[3.5]nonan-2-yl)methanone). CDD-2807 is a potential male contraceptive drug: it is not toxic, efficiently crosses the blood-testis barrier and induces a reversible contraceptive effect in male mice. Its function is as follows. Serine/threonine protein kinase required for spermatid differentiation and male fertility. Promotes sperm flagella assembly during spermatogenesis by mediating phosphorylation of fibrous sheath proteins AKAP3 and AKAP4. Also phosphorylates vimentin/VIM, thereby regulating the dynamic behavior of the intermediate filament cytoskeleton. This Mus musculus (Mouse) protein is Serine/threonine-protein kinase 33.